A 171-amino-acid chain; its full sequence is Myosin regulatory light chain 12A (171 aa).

Thr-18 is modified (phosphothreonine; by MLCK). Position 19 is a phosphoserine; by MLCK (Ser-19). 3 consecutive EF-hand domains span residues 28–63 (SQIQEFKEAFNMIDQNRDGFIDKEDLHDMLASLGKN), 97–132 (DPEDVIRNAFACFDEEATGTIQEDYLRELLTTMGDR), and 133–168 (FTDEEVDELYREAPIDKKGNFNYIEFTRILKHGAKD). The Ca(2+) site is built by Asp-41, Asn-43, Asp-45, and Asp-52.

As to quaternary structure, myosin is a hexamer of 2 heavy chains and 4 light chains. Post-translationally, phosphorylation increases the actin-activated myosin ATPase activity and thereby regulates the contractile activity. It is required to generate the driving force in the migration of the cells but not necessary for localization of myosin-2 at the leading edge.

Functionally, myosin regulatory subunit that plays an important role in regulation of both smooth muscle and nonmuscle cell contractile activity via its phosphorylation. Implicated in cytokinesis, receptor capping, and cell locomotion. This is Myosin regulatory light chain 12A (MYL12A) from Homo sapiens (Human).